The following is a 504-amino-acid chain: Outer capsid protein VP5 (504 aa).

The involved in membrane permeabilization stretch occupies residues 1–42 (MGKFTSFLKRAGSATKNALTSDAAKRMYKMAGKTLQKVVESE).

It belongs to the orbivirus VP5 family.

Its subcellular location is the virion. In terms of biological role, VP5 protein is one of the two proteins (with VP2) which constitute the virus particle outer capsid. Acts as a membrane permeabilization protein that mediates release of viral particles from endosomal compartments into the cytoplasm. Permeabilization activity is probably negatively regulated by VP2 and is triggered by endosomal degradation of VP2 and exposure to low pH. This African horse sickness virus 6 (AHSV-6) protein is Outer capsid protein VP5 (Segment-6).